Consider the following 598-residue polypeptide: Elongation factor 4 (598 aa).

One can recognise a tr-type G domain in the interval 2 to 184 (QHIRNFSIIA…AIVARVPAPK (183 aa)). GTP-binding positions include 14–19 (DHGKST) and 131–134 (NKID).

This sequence belongs to the TRAFAC class translation factor GTPase superfamily. Classic translation factor GTPase family. LepA subfamily.

Its subcellular location is the cell inner membrane. The enzyme catalyses GTP + H2O = GDP + phosphate + H(+). Functionally, required for accurate and efficient protein synthesis under certain stress conditions. May act as a fidelity factor of the translation reaction, by catalyzing a one-codon backward translocation of tRNAs on improperly translocated ribosomes. Back-translocation proceeds from a post-translocation (POST) complex to a pre-translocation (PRE) complex, thus giving elongation factor G a second chance to translocate the tRNAs correctly. Binds to ribosomes in a GTP-dependent manner. This chain is Elongation factor 4, found in Azoarcus sp. (strain BH72).